Consider the following 434-residue polypeptide: Protein maelstrom homolog (434 aa).

A DNA-binding region (HMG box) is located at residues 4–73 (RKASRNAYYF…AQGKDSGPSE (70 aa)). Disordered stretches follow at residues 62-94 (RAAQ…KQNV) and 357-385 (SHFN…SGQN). The span at 357–371 (SHFNSANQEQRSNTP) shows a compositional bias: polar residues.

The protein belongs to the maelstrom family. In terms of assembly, interacts with SMARCB1, SIN3B and DDX4. Interacts with piRNA-associated proteins TDRD1, PIWIL1 and PIWIL2. Interacts with TEX19.

The protein resides in the cytoplasm. It is found in the nucleus. Its function is as follows. Plays a central role during spermatogenesis by repressing transposable elements and preventing their mobilization, which is essential for the germline integrity. Acts via the piRNA metabolic process, which mediates the repression of transposable elements during meiosis by forming complexes composed of piRNAs and Piwi proteins and governs the methylation and subsequent repression of transposons. Its association with piP-bodies suggests a participation in the secondary piRNAs metabolic process. Required for the localization of germ-cell factors to the meiotic nuage. The chain is Protein maelstrom homolog (MAEL) from Macaca fascicularis (Crab-eating macaque).